A 265-amino-acid chain; its full sequence is 5'-nucleotidase SurE (265 aa).

Residues D8, D9, S39, and N96 each contribute to the a divalent metal cation site.

It belongs to the SurE nucleotidase family. Requires a divalent metal cation as cofactor.

The protein localises to the cytoplasm. The enzyme catalyses a ribonucleoside 5'-phosphate + H2O = a ribonucleoside + phosphate. Functionally, nucleotidase that shows phosphatase activity on nucleoside 5'-monophosphates. The sequence is that of 5'-nucleotidase SurE from Dehalococcoides mccartyi (strain CBDB1).